A 152-amino-acid polypeptide reads, in one-letter code: D-aminoacyl-tRNA deacylase (152 aa).

Positions 137-138 (GP) match the Gly-cisPro motif, important for rejection of L-amino acids motif.

Belongs to the DTD family. As to quaternary structure, homodimer.

The protein localises to the cytoplasm. It carries out the reaction glycyl-tRNA(Ala) + H2O = tRNA(Ala) + glycine + H(+). It catalyses the reaction a D-aminoacyl-tRNA + H2O = a tRNA + a D-alpha-amino acid + H(+). An aminoacyl-tRNA editing enzyme that deacylates mischarged D-aminoacyl-tRNAs. Also deacylates mischarged glycyl-tRNA(Ala), protecting cells against glycine mischarging by AlaRS. Acts via tRNA-based rather than protein-based catalysis; rejects L-amino acids rather than detecting D-amino acids in the active site. By recycling D-aminoacyl-tRNA to D-amino acids and free tRNA molecules, this enzyme counteracts the toxicity associated with the formation of D-aminoacyl-tRNA entities in vivo and helps enforce protein L-homochirality. This chain is D-aminoacyl-tRNA deacylase, found in Geobacillus sp. (strain WCH70).